The sequence spans 314 residues: uncharacterized protein (314 aa).

Disordered regions lie at residues 170–203 (RSSMNSQSQMSESSFPTPIDPPPRIPHPPLNPDE) and 258–314 (VGES…PKKR). Positions 171–186 (SSMNSQSQMSESSFPT) are enriched in low complexity. Pro residues predominate over residues 187–200 (PIDPPPRIPHPPLN). Positions 261–272 (SSRQGENTQNVH) are enriched in polar residues. The span at 289-303 (RFKDDARKSNEDEHM) shows a compositional bias: basic and acidic residues.

This is an uncharacterized protein from Arabidopsis thaliana (Mouse-ear cress).